Here is a 78-residue protein sequence, read N- to C-terminus: Small ribosomal subunit protein uS17 (78 aa).

The protein belongs to the universal ribosomal protein uS17 family. As to quaternary structure, part of the 30S ribosomal subunit.

Its function is as follows. One of the primary rRNA binding proteins, it binds specifically to the 5'-end of 16S ribosomal RNA. The protein is Small ribosomal subunit protein uS17 of Agrobacterium fabrum (strain C58 / ATCC 33970) (Agrobacterium tumefaciens (strain C58)).